We begin with the raw amino-acid sequence, 266 residues long: Phosphate import ATP-binding protein PstB 2 (266 aa).

The 240-residue stretch at 13–252 (LEAQGVNVYY…GPTEEIFQNP (240 aa)) folds into the ABC transporter domain. 45 to 52 (GPSGCGKS) is an ATP binding site.

It belongs to the ABC transporter superfamily. Phosphate importer (TC 3.A.1.7) family. In terms of assembly, the complex is composed of two ATP-binding proteins (PstB), two transmembrane proteins (PstC and PstA) and a solute-binding protein (PstS).

It is found in the cell inner membrane. It carries out the reaction phosphate(out) + ATP + H2O = ADP + 2 phosphate(in) + H(+). Its function is as follows. Part of the ABC transporter complex PstSACB involved in phosphate import. Responsible for energy coupling to the transport system. This Synechocystis sp. (strain ATCC 27184 / PCC 6803 / Kazusa) protein is Phosphate import ATP-binding protein PstB 2.